Consider the following 89-residue polypeptide: Neuropeptide S (89 aa).

The signal sequence occupies residues Met-1 to Cys-23. The propeptide occupies Tyr-24–Arg-69.

The protein localises to the secreted. May play an important anorexigenic role. Modulates arousal and anxiety as well as increases locomotor activity. Binds to its receptor NPSR1 with nanomolar affinity to increase intracellular calcium concentrations. The chain is Neuropeptide S (Nps) from Mus musculus (Mouse).